We begin with the raw amino-acid sequence, 152 residues long: Large ribosomal subunit protein uL11 (152 aa).

It belongs to the universal ribosomal protein uL11 family. In terms of assembly, part of the ribosomal stalk of the 50S ribosomal subunit. Interacts with L10 and the large rRNA to form the base of the stalk. L10 forms an elongated spine to which L12 dimers bind in a sequential fashion forming a multimeric L10(L12)X complex. One or more lysine residues are methylated.

Functionally, forms part of the ribosomal stalk which helps the ribosome interact with GTP-bound translation factors. The chain is Large ribosomal subunit protein uL11 from Mycoplasmoides gallisepticum (strain R(low / passage 15 / clone 2)) (Mycoplasma gallisepticum).